The chain runs to 302 residues: MGLCKCPKRLVTNQFCFEHRVNVCEHCMVQSHPKCIVQSYLQWLRDSDYISNCNLCGTSLEQGECVRLVCYHVFHWDCLNARQAALPANTAPRGHQCPGCSVEIFPNTNLVSPVADALKNYLAQVNWGRNGLGLALLSEDQSSSLKAIKSKASVSQAAVSNMTKVHHIHSGGERERGKPNGGDASTPHSVLLMDAFNPPSSGDFNASSRRPLLPRQSPIGGTDRDDNKYQRRTPAALLSRWTRRFYSPSSRPPWRRTWFLVLSGILAFVMFIYLLAWMGRSGSNDGLDESWNNPNPQPNHYE.

A B box-type; degenerate zinc finger spans residues 1-43 (MGLCKCPKRLVTNQFCFEHRVNVCEHCMVQSHPKCIVQSYLQW). An RING-type; atypical zinc finger spans residues 53-101 (CNLCGTSLEQGECVRLVCYHVFHWDCLNARQAALPANTAPRGHQCPGCS). Residues 168–233 (IHSGGERERG…RDDNKYQRRT (66 aa)) form a disordered region. Residues 198-208 (PPSSGDFNASS) are compositionally biased toward polar residues. At S217 the chain carries Phosphoserine. Residues 258–278 (WFLVLSGILAFVMFIYLLAWM) form a helical membrane-spanning segment.

Belongs to the ZFPL1 family.

Its subcellular location is the membrane. The chain is Zinc finger protein-like 1 homolog from Drosophila pseudoobscura pseudoobscura (Fruit fly).